The sequence spans 198 residues: Glycerol-3-phosphate acyltransferase 2 (198 aa).

4 consecutive transmembrane segments (helical) span residues 4–24 (TYLL…LVVG), 71–91 (LPMV…AVLG), 113–133 (LLCY…TLLF), and 147–167 (VVAV…AMCL).

It belongs to the PlsY family. As to quaternary structure, probably interacts with PlsX.

It localises to the cell membrane. It carries out the reaction an acyl phosphate + sn-glycerol 3-phosphate = a 1-acyl-sn-glycero-3-phosphate + phosphate. It participates in lipid metabolism; phospholipid metabolism. Functionally, catalyzes the transfer of an acyl group from acyl-phosphate (acyl-PO(4)) to glycerol-3-phosphate (G3P) to form lysophosphatidic acid (LPA). This enzyme utilizes acyl-phosphate as fatty acyl donor, but not acyl-CoA or acyl-ACP. This Bacillus cereus (strain ZK / E33L) protein is Glycerol-3-phosphate acyltransferase 2.